We begin with the raw amino-acid sequence, 348 residues long: Dihydroorotase (348 aa).

Zn(2+) contacts are provided by H17 and H19. Residues 19-21 (HLR) and N45 contribute to the substrate site. Residues K103, H140, and H178 each coordinate Zn(2+). K103 bears the N6-carboxylysine mark. H140 provides a ligand contact to substrate. L223 provides a ligand contact to substrate. D251 is a Zn(2+) binding site. Residue D251 is part of the active site. 2 residues coordinate substrate: H255 and A267.

The protein belongs to the metallo-dependent hydrolases superfamily. DHOase family. Class II DHOase subfamily. Homodimer. Zn(2+) serves as cofactor.

It catalyses the reaction (S)-dihydroorotate + H2O = N-carbamoyl-L-aspartate + H(+). It functions in the pathway pyrimidine metabolism; UMP biosynthesis via de novo pathway; (S)-dihydroorotate from bicarbonate: step 3/3. Catalyzes the reversible cyclization of carbamoyl aspartate to dihydroorotate. The protein is Dihydroorotase of Escherichia coli O139:H28 (strain E24377A / ETEC).